Reading from the N-terminus, the 176-residue chain is Ribosome maturation factor RimM (176 aa).

A PRC barrel domain is found at 97–176; it reads EDEFYWRDLI…QILVDWDPDF (80 aa).

Belongs to the RimM family. As to quaternary structure, binds ribosomal protein uS19.

It localises to the cytoplasm. Its function is as follows. An accessory protein needed during the final step in the assembly of 30S ribosomal subunit, possibly for assembly of the head region. Essential for efficient processing of 16S rRNA. May be needed both before and after RbfA during the maturation of 16S rRNA. It has affinity for free ribosomal 30S subunits but not for 70S ribosomes. The sequence is that of Ribosome maturation factor RimM from Shewanella putrefaciens (strain CN-32 / ATCC BAA-453).